We begin with the raw amino-acid sequence, 331 residues long: 3-dehydroquinate synthase homolog (331 aa).

Belongs to the archaeal-type DHQ synthase family.

The polypeptide is 3-dehydroquinate synthase homolog (Aquifex aeolicus (strain VF5)).